A 238-amino-acid chain; its full sequence is Probable transcriptional regulatory protein VPA0011 (238 aa).

It belongs to the TACO1 family.

Its subcellular location is the cytoplasm. This Vibrio parahaemolyticus serotype O3:K6 (strain RIMD 2210633) protein is Probable transcriptional regulatory protein VPA0011.